A 1141-amino-acid chain; its full sequence is Probable ubiquitin carboxyl-terminal hydrolase 2 (1141 aa).

Phosphothreonine is present on T112. S113 bears the Phosphoserine mark. Phosphothreonine is present on T115. In terms of domain architecture, USP spans 614–1124 (IGLENTGNLC…NPYMLTYIRK (511 aa)). C623 acts as the Nucleophile in catalysis. Position 721 is a phosphothreonine (T721). Phosphoserine is present on S722. The disordered stretch occupies residues 748–770 (EEQAQGLEQEQGQDEAKSPAEQS). The active-site Proton acceptor is the H1076.

This sequence belongs to the peptidase C19 family.

It carries out the reaction Thiol-dependent hydrolysis of ester, thioester, amide, peptide and isopeptide bonds formed by the C-terminal Gly of ubiquitin (a 76-residue protein attached to proteins as an intracellular targeting signal).. This Schizosaccharomyces pombe (strain 972 / ATCC 24843) (Fission yeast) protein is Probable ubiquitin carboxyl-terminal hydrolase 2 (ubp2).